The sequence spans 458 residues: Ammonium transporter Rh type B (458 aa).

The Cytoplasmic portion of the chain corresponds to M1 to L13. Residues Q14–V34 traverse the membrane as a helical segment. At R35–Y61 the chain is on the extracellular side. A glycan (N-linked (GlcNAc...) asparagine) is linked at N49. A helical transmembrane segment spans residues P62 to L82. Over Q83–G86 the chain is Cytoplasmic. The chain crosses the membrane as a helical span at residues F87 to V107. Over Q108–E124 the chain is Extracellular. The helical transmembrane segment at S125–G145 threads the bilayer. Residues K146–P149 lie on the Cytoplasmic side of the membrane. Residues A150–L170 traverse the membrane as a helical segment. Over L171 to D178 the chain is Extracellular. Residues A179–Y201 traverse the membrane as a helical segment. The Cytoplasmic portion of the chain corresponds to R202–D219. Residues L220–P240 form a helical membrane-spanning segment. Residues T241–A251 are Extracellular-facing. The chain crosses the membrane as a helical span at residues L252–V272. Topologically, residues G273 to H282 are cytoplasmic. A helical membrane pass occupies residues V283 to T303. A topological domain (extracellular) is located at residue P304. The chain crosses the membrane as a helical span at residues F305–F325. Topologically, residues T326–G346 are cytoplasmic. A helical transmembrane segment spans residues M347–S367. Residues Y368–Q393 are Extracellular-facing. A helical membrane pass occupies residues L394–L414. The Cytoplasmic portion of the chain corresponds to L415–A458. An interaction with ANK3 region spans residues R416 to P424. The Basolateral sorting signal signature appears at Y429–Q432.

It belongs to the ammonium transporter (TC 2.A.49) family. Rh subfamily. In terms of assembly, interacts (via C-terminus) with ANK2 and ANK3; required for targeting to the basolateral membrane. In terms of processing, N-glycosylated.

The protein resides in the cell membrane. The protein localises to the basolateral cell membrane. The enzyme catalyses NH4(+)(in) = NH4(+)(out). The catalysed reaction is methylamine(out) = methylamine(in). It catalyses the reaction CO2(out) = CO2(in). In terms of biological role, ammonium transporter involved in the maintenance of acid-base homeostasis. Transports ammonium and its related derivative methylammonium across the basolateral plasma membrane of epithelial cells likely contributing to renal transepithelial ammonia transport and ammonia metabolism. May transport either NH4(+) or NH3 ammonia species predominantly mediating an electrogenic NH4(+) transport. May act as a CO2 channel providing for renal acid secretion. In Sus scrofa (Pig), this protein is Ammonium transporter Rh type B (RHBG).